The sequence spans 137 residues: MGLLSEFKAFAVKGNVVDMAVGIIIGAAFGKIVSSFVGDVIMPPIGLLIGGVDFSDLAITLKAAEGDVPAVVLAYGKFIQTILDFVIVAFAIFMGVKAINRLKREEAVAPSEPPVPSAEETLLTEIRDLLKAQQNKS.

2 helical membrane passes run 9-29 (AFAV…GAAF) and 79-99 (IQTI…VKAI).

It belongs to the MscL family. In terms of assembly, homopentamer.

The protein localises to the cell inner membrane. In terms of biological role, channel that opens in response to stretch forces in the membrane lipid bilayer. May participate in the regulation of osmotic pressure changes within the cell. The chain is Large-conductance mechanosensitive channel from Pseudomonas aeruginosa (strain UCBPP-PA14).